The primary structure comprises 494 residues: Flagellin A (494 aa).

The protein belongs to the bacterial flagellin family. In terms of assembly, heteromer of FlaA and FlaB. FlaB is located proximal to the hook while the remainder of the filament is composed of the predominant FlaA.

Its subcellular location is the secreted. The protein localises to the bacterial flagellum. In terms of biological role, flagellin is the subunit protein which polymerizes to form the filaments of bacterial flagella. Important for motility and virulence. In Helicobacter mustelae, this protein is Flagellin A (flaA).